The primary structure comprises 413 residues: MDEEHIALYPFASEVSAYVESLRVSLESLLNSPAFRRSRVRGMERVMQSIEGEIETTLIKDESWLLSETLSYPFAQILVACVDDQLFTKRYALKEAEAASKWLEKESTDFLLEFGEDFGIQAEAEELQFSMHFADYIRFSSSIREPVWKLTNRQLRSGMVVVTKKDFVRLLQEAIKERIEKSFPIPKIPSEVSSFCAPYVAEIKDKFEVHKKKFGTTDFGVVEPDLFPPCISHALANVQGGVNLAHSMRFAMTSFLLSVGMSVDEILNLFNVSPDFDAEVTLYQIEHIAGATGNVYKPPACDTMRTYGNCIGKDRLCEKINHPLAYYEKKIYLKNKEKEMEKEKEEKEEKEKQEEKKEEEEKEKQEEIKKKKKKEKQEEKGKKIKEGKKRERKQEKETKRREGKEKQEEKKRI.

4 residues coordinate [4Fe-4S] cluster: C230, C301, C310, and C317. 3 stretches are compositionally biased toward basic and acidic residues: residues 340-356, 362-381, and 388-413; these read MEKEKEEKEEKEKQEEK, KEKQEEIKKKKKKEKQEEKG, and KKRERKQEKETKRREGKEKQEEKKRI. The tract at residues 340–413 is disordered; the sequence is MEKEKEEKEE…KEKQEEKKRI (74 aa).

The protein belongs to the eukaryotic-type primase large subunit family. In terms of assembly, heterodimer of a small subunit (PriS) and a large subunit (PriL). The cofactor is [4Fe-4S] cluster.

Its function is as follows. Regulatory subunit of DNA primase, an RNA polymerase that catalyzes the synthesis of short RNA molecules used as primers for DNA polymerase during DNA replication. Stabilizes and modulates the activity of the small subunit, increasing the rate of DNA synthesis, and conferring RNA synthesis capability. The DNA polymerase activity may enable DNA primase to also catalyze primer extension after primer synthesis. May also play a role in DNA repair. The protein is DNA primase large subunit PriL of Methanosarcina barkeri (strain Fusaro / DSM 804).